The sequence spans 600 residues: Xylulose kinase (600 aa).

Residue 79 to 82 participates in substrate binding; the sequence is WLEA. The residue at position 244 (Ser244) is a Phosphoserine. Asp299 lines the substrate pocket. ATP-binding positions include Gly358 and 505 to 509; that span reads GASKN.

This sequence belongs to the FGGY kinase family.

Its subcellular location is the cytoplasm. The enzyme catalyses D-xylulose + ATP = D-xylulose 5-phosphate + ADP + H(+). In terms of biological role, xylulose kinase necessary for growth in culture media with D-xylulose as the solecarbon source. The sequence is that of Xylulose kinase from Saccharomyces cerevisiae (strain ATCC 204508 / S288c) (Baker's yeast).